We begin with the raw amino-acid sequence, 229 residues long: Prolactin (229 aa).

The N-terminal stretch at 1–30 (MDSKGSSQKGSRLLLLLVVSNLLLCQGVVS) is a signal peptide. Cys-34 and Cys-41 are oxidised to a cystine. 3 positions are modified to phosphoserine: Ser-56, Ser-64, and Ser-120. Cystine bridges form between Cys-88–Cys-204 and Cys-221–Cys-229.

This sequence belongs to the somatotropin/prolactin family. In terms of assembly, interacts with PRLR.

The protein localises to the secreted. Its function is as follows. Prolactin acts primarily on the mammary gland by promoting lactation. The sequence is that of Prolactin (PRL) from Bos taurus (Bovine).